A 228-amino-acid chain; its full sequence is Ribose-5-phosphate isomerase A (228 aa).

Residues 31–34, 85–88, and 97–100 contribute to the substrate site; these read TGST, DGAD, and KGGG. The active-site Proton acceptor is Glu106. Substrate is bound at residue Lys124.

Belongs to the ribose 5-phosphate isomerase family. As to quaternary structure, homodimer.

It catalyses the reaction aldehydo-D-ribose 5-phosphate = D-ribulose 5-phosphate. It participates in carbohydrate degradation; pentose phosphate pathway; D-ribose 5-phosphate from D-ribulose 5-phosphate (non-oxidative stage): step 1/1. In terms of biological role, catalyzes the reversible conversion of ribose-5-phosphate to ribulose 5-phosphate. The protein is Ribose-5-phosphate isomerase A of Haloarcula marismortui (strain ATCC 43049 / DSM 3752 / JCM 8966 / VKM B-1809) (Halobacterium marismortui).